Reading from the N-terminus, the 486-residue chain is ATP synthase subunit beta (486 aa).

Positions 1-12 (MTTTAEKTDRPG) are enriched in basic and acidic residues. Residues 1–22 (MTTTAEKTDRPGKPGSSDTSGR) form a disordered region. 171–178 (GGAGVGKT) serves as a coordination point for ATP.

It belongs to the ATPase alpha/beta chains family. In terms of assembly, F-type ATPases have 2 components, CF(1) - the catalytic core - and CF(0) - the membrane proton channel. CF(1) has five subunits: alpha(3), beta(3), gamma(1), delta(1), epsilon(1). CF(0) has three main subunits: a(1), b(2) and c(9-12). The alpha and beta chains form an alternating ring which encloses part of the gamma chain. CF(1) is attached to CF(0) by a central stalk formed by the gamma and epsilon chains, while a peripheral stalk is formed by the delta and b chains.

Its subcellular location is the cell membrane. It catalyses the reaction ATP + H2O + 4 H(+)(in) = ADP + phosphate + 5 H(+)(out). Its function is as follows. Produces ATP from ADP in the presence of a proton gradient across the membrane. The catalytic sites are hosted primarily by the beta subunits. The chain is ATP synthase subunit beta from Mycobacterium tuberculosis (strain ATCC 25177 / H37Ra).